Reading from the N-terminus, the 1362-residue chain is Insulin receptor (1362 aa).

Positions 1 to 37 (MGQGVLRGEGHPNNNPNSKVGWKSLVGIITIFMLILC) are cleaved as a signal peptide. A leucine-rich region region spans residues 38 to 184 (DQSDGKICYS…DSVEDNYIEL (147 aa)). A disulfide bridge connects residues cysteine 45 and cysteine 63. Asparagine 53, asparagine 115, and asparagine 148 each carry an N-linked (GlcNAc...) asparagine glycan. Intrachain disulfides connect cysteine 163/cysteine 192, cysteine 196/cysteine 219, cysteine 206/cysteine 225, cysteine 229/cysteine 238, cysteine 233/cysteine 244, cysteine 245/cysteine 253, cysteine 249/cysteine 262, cysteine 265/cysteine 274, cysteine 278/cysteine 290, cysteine 296/cysteine 321, cysteine 303/cysteine 311, cysteine 325/cysteine 338, cysteine 341/cysteine 345, and cysteine 349/cysteine 370. N-linked (GlcNAc...) asparagine glycosylation occurs at asparagine 332. Residues asparagine 374, asparagine 434, and asparagine 455 are each glycosylated (N-linked (GlcNAc...) asparagine). Residues cysteine 472 and cysteine 505 are joined by a disulfide bond. Fibronectin type-III domains lie at 508–629 (NLLT…TNET) and 633–730 (VPLD…IQKE). 5 N-linked (GlcNAc...) asparagine glycosylation sites follow: asparagine 551, asparagine 627, asparagine 642, asparagine 660, and asparagine 707. Intrachain disulfides connect cysteine 683-cysteine 896 and cysteine 822-cysteine 830. The interval 694 to 714 (WTPPTEIDENGNENQTEHTSV) is disordered. The span at 705-714 (NENQTEHTSV) shows a compositional bias: polar residues. An insulin-binding region spans residues 741–749 (ENYLHNEVF). The Extracellular segment spans residues 759–951 (DLFGVANGTL…PDHPHSNIVK (193 aa)). Residues asparagine 765 and asparagine 779 are each glycosylated (N-linked (GlcNAc...) asparagine). Residues 849–944 (VVGPITYEYV…EQAYFQVPDH (96 aa)) form the Fibronectin type-III 3 domain. 2 N-linked (GlcNAc...) asparagine glycosylation sites follow: asparagine 917 and asparagine 930. A helical transmembrane segment spans residues 952–972 (IITGPIIAVFLLLIVLVYCVV). Residues 973-1362 (QKKKDAEGPA…ILSLPRSSPS (390 aa)) are Cytoplasmic-facing. A Phosphotyrosine; by autocatalysis modification is found at tyrosine 993. The Protein kinase domain occupies 1012 to 1287 (INLLRELGQG…MLKDDLRPSF (276 aa)). Residues serine 1022, lysine 1046, and 1093 to 1099 (ELMAHGD) contribute to the ATP site. The Proton donor/acceptor role is filled by aspartate 1148. Residues 1152–1153 (RN) and aspartate 1166 contribute to the ATP site. Residues tyrosine 1174, tyrosine 1178, tyrosine 1179, tyrosine 1335, and tyrosine 1341 each carry the phosphotyrosine; by autocatalysis modification.

The protein belongs to the protein kinase superfamily. Tyr protein kinase family. Insulin receptor subfamily. As to quaternary structure, tetramer of 2 alpha and 2 beta chains linked by disulfide bonds. The alpha chains contribute to the formation of the ligand-binding domain, while the beta chains carry the kinase domain. In terms of processing, autophosphorylated on tyrosine residues in response to insulin. In terms of tissue distribution, localized mainly to the envelope in oocytes. Localized to the animal hemisphere during early embryonic cleavage. Expressed during organogenesis in regions of ecto- and mesodermic origins. Expressed in the entire encephalon, the otic and optic vesicles, the gills, the somites and the pronephric tubules of the embryo. Also found in adult liver, muscle and regenerated forelimbs.

Its subcellular location is the cell membrane. It carries out the reaction L-tyrosyl-[protein] + ATP = O-phospho-L-tyrosyl-[protein] + ADP + H(+). Autophosphorylation activates the kinase activity. In terms of biological role, receptor tyrosine kinase which mediates actions of insulin. May be required for forelimb regeneration. This chain is Insulin receptor (insr), found in Xenopus laevis (African clawed frog).